A 195-amino-acid polypeptide reads, in one-letter code: A-type ATP synthase subunit E (195 aa).

The protein belongs to the V-ATPase E subunit family. Has multiple subunits with at least A(3), B(3), C, D, E, F, H, I and proteolipid K(x).

The protein resides in the cell membrane. Component of the A-type ATP synthase that produces ATP from ADP in the presence of a proton gradient across the membrane. The protein is A-type ATP synthase subunit E of Staphylothermus marinus (strain ATCC 43588 / DSM 3639 / JCM 9404 / F1).